Consider the following 447-residue polypeptide: Ribosomal protein uS12 methylthiotransferase RimO (447 aa).

In terms of domain architecture, MTTase N-terminal spans 4–114; that stretch reads PKVGFVSLGC…VMEAVHEYVP (111 aa). Residues cysteine 13, cysteine 49, cysteine 78, cysteine 147, cysteine 151, and cysteine 154 each contribute to the [4Fe-4S] cluster site. Residues 133-370 form the Radical SAM core domain; that stretch reads LTPKHYAYLK…MQVQQEISAA (238 aa). Residues 373–443 enclose the TRAM domain; the sequence is QKRIGQTMTV…EYDLFAKLIQ (71 aa).

It belongs to the methylthiotransferase family. RimO subfamily. [4Fe-4S] cluster is required as a cofactor.

It localises to the cytoplasm. The enzyme catalyses L-aspartate(89)-[ribosomal protein uS12]-hydrogen + (sulfur carrier)-SH + AH2 + 2 S-adenosyl-L-methionine = 3-methylsulfanyl-L-aspartate(89)-[ribosomal protein uS12]-hydrogen + (sulfur carrier)-H + 5'-deoxyadenosine + L-methionine + A + S-adenosyl-L-homocysteine + 2 H(+). Catalyzes the methylthiolation of an aspartic acid residue of ribosomal protein uS12. The sequence is that of Ribosomal protein uS12 methylthiotransferase RimO from Acinetobacter baylyi (strain ATCC 33305 / BD413 / ADP1).